A 29-amino-acid polypeptide reads, in one-letter code: Bacteriocin (29 aa).

The protein resides in the secreted. Functionally, has antibacterial activity against strains of L.monocytogenes, L.lactis, B.subtilis, S.typhi, S.aureus, C.perfringens, E.aerogenes and M.luteus but not against E.coli, S.sonnei, S.pneumoniae, S.faecalis, P.aeruginosa, K.pneumoniae or P.vulgaris. The sequence is that of Bacteriocin from Lactococcus lactis subsp. lactis (Streptococcus lactis).